The chain runs to 369 residues: Cell division protein FtsZ (369 aa).

GTP contacts are provided by residues 27–31 (GAGNN), 119–121 (GTG), Glu-150, and Asn-189.

It belongs to the FtsZ family. In terms of assembly, homodimer. Polymerizes to form a dynamic ring structure in a strictly GTP-dependent manner. Interacts directly with several other division proteins.

It is found in the cytoplasm. Functionally, essential cell division protein that forms a contractile ring structure (Z ring) at the future cell division site. The regulation of the ring assembly controls the timing and the location of cell division. One of the functions of the FtsZ ring is to recruit other cell division proteins to the septum to produce a new cell wall between the dividing cells. Binds GTP and shows GTPase activity. The chain is Cell division protein FtsZ from Mycoplasma genitalium (strain ATCC 33530 / DSM 19775 / NCTC 10195 / G37) (Mycoplasmoides genitalium).